Reading from the N-terminus, the 105-residue chain is Small ribosomal subunit protein uS17 (105 aa).

This sequence belongs to the universal ribosomal protein uS17 family. In terms of assembly, part of the 30S ribosomal subunit.

One of the primary rRNA binding proteins, it binds specifically to the 5'-end of 16S ribosomal RNA. This Thermus thermophilus (strain ATCC BAA-163 / DSM 7039 / HB27) protein is Small ribosomal subunit protein uS17.